The sequence spans 394 residues: Chaperone protein DnaJ (394 aa).

Residues 4-68 (DYYEILGVSR…ELRARYDRFG (65 aa)) form the J domain. The CR-type zinc-finger motif lies at 136–218 (GGEKQIRISH…CNGEGLAQTT (83 aa)). 8 residues coordinate Zn(2+): Cys-149, Cys-152, Cys-166, Cys-169, Cys-192, Cys-195, Cys-206, and Cys-209. CXXCXGXG motif repeat units follow at residues 149–156 (CPVCGGSG), 166–173 (CPTCGGAG), 192–199 (CPTCGGAG), and 206–213 (CYNCNGEG).

This sequence belongs to the DnaJ family. Homodimer. It depends on Zn(2+) as a cofactor.

It is found in the cytoplasm. Functionally, participates actively in the response to hyperosmotic and heat shock by preventing the aggregation of stress-denatured proteins and by disaggregating proteins, also in an autonomous, DnaK-independent fashion. Unfolded proteins bind initially to DnaJ; upon interaction with the DnaJ-bound protein, DnaK hydrolyzes its bound ATP, resulting in the formation of a stable complex. GrpE releases ADP from DnaK; ATP binding to DnaK triggers the release of the substrate protein, thus completing the reaction cycle. Several rounds of ATP-dependent interactions between DnaJ, DnaK and GrpE are required for fully efficient folding. Also involved, together with DnaK and GrpE, in the DNA replication of plasmids through activation of initiation proteins. The protein is Chaperone protein DnaJ of Synechococcus sp. (strain JA-3-3Ab) (Cyanobacteria bacterium Yellowstone A-Prime).